The chain runs to 298 residues: Cyclin-dependent kinase 2 (298 aa).

An N-acetylmethionine modification is found at methionine 1. One can recognise a Protein kinase domain in the interval 4–286; it reads FQKVEKIGEG…AKAALAHPFF (283 aa). Lysine 6 carries the post-translational modification N6-acetyllysine. 10–18 contributes to the ATP binding site; sequence IGEGTYGVV. Threonine 14 carries the phosphothreonine modification. Tyrosine 15 carries the phosphotyrosine; by WEE1 modification. Tyrosine 19 bears the Phosphotyrosine mark. Residues lysine 33, 81–83, and aspartate 86 each bind ATP; that span reads EFL. The active-site Proton acceptor is the aspartate 127. ATP-binding positions include 129–132 and aspartate 145; that span reads KPQN. 2 residues coordinate Mg(2+): asparagine 132 and aspartate 145. Threonine 160 is modified (phosphothreonine; by CAK and CCRK).

Belongs to the protein kinase superfamily. CMGC Ser/Thr protein kinase family. CDC2/CDKX subfamily. Found in a complex with CABLES1, CCNA1 and CCNE1. Interacts with CABLES1. Interacts with UHRF2. Part of a complex consisting of UHRF2, CDK2 and CCNE1. Interacts with the Speedy/Ringo proteins SPDYA and SPDYC. Interaction with SPDYA promotes kinase activation via a conformation change that alleviates obstruction of the substrate-binding cleft by the T-loop. Found in a complex with both SPDYA and CDKN1B/KIP1. Binds to RB1 and CDK7. Binding to CDKN1A (p21) leads to CDK2/cyclin E inactivation at the G1-S phase DNA damage checkpoint, thereby arresting cells at the G1-S transition during DNA repair. Associated with PTPN6 and beta-catenin/CTNNB1. Interacts with CACUL1. May interact with CEP63. Interacts with ANKRD17. Interacts with CEBPA (when phosphorylated). Forms a ternary complex with CCNA2 and CDKN1B; CDKN1B inhibits the kinase activity of CDK2 through conformational rearrangements. Interacts with cyclins A, B1, B3, D, or E. Interacts with CDK2AP2. The cofactor is Mg(2+). Post-translationally, phosphorylated at Thr-160 by CDK7 in a CAK complex. Phosphorylation at Thr-160 promotes kinase activity, whereas phosphorylation at Tyr-15 by WEE1 reduces slightly kinase activity. Phosphorylated on Thr-14 and Tyr-15 during S and G2 phases before being dephosphorylated by CDC25A. Nitrosylated after treatment with nitric oxide (DETA-NO).

The protein localises to the cytoplasm. It localises to the cytoskeleton. It is found in the microtubule organizing center. The protein resides in the centrosome. Its subcellular location is the nucleus. The protein localises to the cajal body. It localises to the endosome. The enzyme catalyses L-seryl-[protein] + ATP = O-phospho-L-seryl-[protein] + ADP + H(+). It carries out the reaction L-threonyl-[protein] + ATP = O-phospho-L-threonyl-[protein] + ADP + H(+). Phosphorylation at Thr-14 or Tyr-15 inactivates the enzyme, while phosphorylation at Thr-160 activates it. Inhibited by 1,25-dihydroxyvitamin D(3) (1,25-(OH)(2)D(3)), AG-024322, N-(4-Piperidinyl)-4-(2,6-dichlorobenzoylamino)-1H-pyrazole-3-carboxamide (AT7519), R547 (Ro-4584820), purine, pyrimidine and pyridine derivatives, 2-aminopyrimidines, paullones, thiazo derivatives, macrocyclic quinoxalin-2-one, pyrazolo[1,5-a]-1,3,5-triazine, pyrazolo[1,5-a]pyrimidine, 2-(1-ethyl-2-hydroxyethylamino)-6-benzylamino-9-isopropylpurine (roscovitine, seliciclib and CYC202), SNS-032 (BMS-387032), triazolo[1,5-a]pyrimidines, staurosporine and olomoucine. Stimulated by MYC. Inactivated by CDKN1A (p21). Serine/threonine-protein kinase involved in the control of the cell cycle; essential for meiosis, but dispensable for mitosis. Phosphorylates CABLES1, CTNNB1, CDK2AP2, ERCC6, NBN, USP37, p53/TP53, NPM1, CDK7, RB1, BRCA2, MYC, NPAT, EZH2. Triggers duplication of centrosomes and DNA. Acts at the G1-S transition to promote the E2F transcriptional program and the initiation of DNA synthesis, and modulates G2 progression; controls the timing of entry into mitosis/meiosis by controlling the subsequent activation of cyclin B/CDK1 by phosphorylation, and coordinates the activation of cyclin B/CDK1 at the centrosome and in the nucleus. Crucial role in orchestrating a fine balance between cellular proliferation, cell death, and DNA repair in embryonic stem cells (ESCs). Activity of CDK2 is maximal during S phase and G2; activated by interaction with cyclin E during the early stages of DNA synthesis to permit G1-S transition, and subsequently activated by cyclin A2 (cyclin A1 in germ cells) during the late stages of DNA replication to drive the transition from S phase to mitosis, the G2 phase. EZH2 phosphorylation promotes H3K27me3 maintenance and epigenetic gene silencing. Cyclin E/CDK2 prevents oxidative stress-mediated Ras-induced senescence by phosphorylating MYC. Involved in G1-S phase DNA damage checkpoint that prevents cells with damaged DNA from initiating mitosis; regulates homologous recombination-dependent repair by phosphorylating BRCA2, this phosphorylation is low in S phase when recombination is active, but increases as cells progress towards mitosis. In response to DNA damage, double-strand break repair by homologous recombination a reduction of CDK2-mediated BRCA2 phosphorylation. Involved in regulation of telomere repair by mediating phosphorylation of NBN. Phosphorylation of RB1 disturbs its interaction with E2F1. NPM1 phosphorylation by cyclin E/CDK2 promotes its dissociates from unduplicated centrosomes, thus initiating centrosome duplication. Cyclin E/CDK2-mediated phosphorylation of NPAT at G1-S transition and until prophase stimulates the NPAT-mediated activation of histone gene transcription during S phase. Required for vitamin D-mediated growth inhibition by being itself inactivated. Involved in the nitric oxide- (NO) mediated signaling in a nitrosylation/activation-dependent manner. USP37 is activated by phosphorylation and thus triggers G1-S transition. CTNNB1 phosphorylation regulates insulin internalization. Phosphorylates FOXP3 and negatively regulates its transcriptional activity and protein stability. Phosphorylates ERCC6 which is essential for its chromatin remodeling activity at DNA double-strand breaks. Acts as a regulator of the phosphatidylinositol 3-kinase/protein kinase B signal transduction by mediating phosphorylation of the C-terminus of protein kinase B (PKB/AKT1 and PKB/AKT2), promoting its activation. The polypeptide is Cyclin-dependent kinase 2 (CDK2) (Homo sapiens (Human)).